The sequence spans 168 residues: Phosphopantetheine adenylyltransferase (168 aa).

Thr-14 lines the substrate pocket. ATP is bound by residues 14–15 (TF) and His-22. Residues Lys-46, Leu-78, and Arg-92 each contribute to the substrate site. ATP contacts are provided by residues 93–95 (GLR), Glu-103, and 128–134 (YSFISSS).

The protein belongs to the bacterial CoaD family. As to quaternary structure, homohexamer. Mg(2+) serves as cofactor.

The protein resides in the cytoplasm. It catalyses the reaction (R)-4'-phosphopantetheine + ATP + H(+) = 3'-dephospho-CoA + diphosphate. It functions in the pathway cofactor biosynthesis; coenzyme A biosynthesis; CoA from (R)-pantothenate: step 4/5. In terms of biological role, reversibly transfers an adenylyl group from ATP to 4'-phosphopantetheine, yielding dephospho-CoA (dPCoA) and pyrophosphate. The chain is Phosphopantetheine adenylyltransferase from Xanthomonas campestris pv. campestris (strain 8004).